The sequence spans 244 residues: Glutathione-independent glyoxalase hsp3101 (244 aa).

Active-site residues include C139, H140, and E173.

This sequence belongs to the peptidase C56 family. HSP31-like subfamily.

The protein resides in the cytoplasm. It localises to the nucleus. It catalyses the reaction methylglyoxal + H2O = (R)-lactate + H(+). Functionally, catalyzes the conversion of methylglyoxal (MG) to D-lactate in a single glutathione (GSH)-independent step. May play a role in detoxifying endogenously produced glyoxals. Involved in protection against reactive oxygen species (ROS). The protein is Glutathione-independent glyoxalase hsp3101 of Schizosaccharomyces pombe (strain 972 / ATCC 24843) (Fission yeast).